A 698-amino-acid polypeptide reads, in one-letter code: Transferrin-binding protein B (698 aa).

A signal peptide spans 1 to 20 (MNNPLVNQAAMVLPVFLLSA). The N-palmitoyl cysteine moiety is linked to residue C21. Residue C21 is the site of S-diacylglycerol cysteine attachment. 6 disordered regions span residues 33–58 (VDTEAPRPAPKYQDVSSEKPQAQKDQ), 83–102 (IKLSENDWEQTDNGDIKNPS), 294–324 (FSGKAEATDKPKNDGETKEHPFVSDSSSLSG), 349–383 (GSAKTQDKPRNGAVASGGAGAAASNGAAGTSSENS), 428–479 (ESGK…GDAN), and 669–698 (TKNATDASGNGNSASSATVVFGAKRQKPVQ). The span at 46 to 56 (DVSSEKPQAQK) shows a compositional bias: polar residues. The segment covering 299–315 (EATDKPKNDGETKEHPF) has biased composition (basic and acidic residues). Positions 369 to 383 (AAASNGAAGTSSENS) are enriched in low complexity. Residues 460–476 (QAGTAENGNPAASNTAG) are compositionally biased toward polar residues. Residues 671–686 (NATDASGNGNSASSAT) are compositionally biased toward low complexity.

Belongs to the TbpB family. In terms of assembly, binds only human holo-transferrin (TF), via the TF C-terminus. Forms a large complex with TbpA and TF. Interacts via its C-terminal domain with Slam1.

It is found in the cell outer membrane. It localises to the cell surface. In terms of biological role, neisseria acquires iron by extracting it from serum transferrin (TF) in its human host. Acts as a TF receptor and is required for TF utilization. Involved in the initial capture of TF. Helps select only those TF molecules that can be used as an iron source and concentrates them on the cell surface, maintaining the iron-loaded status of the TF C-terminal lobe until its delivery to TbpA. The chain is Transferrin-binding protein B from Neisseria meningitidis serogroup A / serotype 4A (strain DSM 15465 / Z2491).